The sequence spans 749 residues: Basic juvenile hormone-suppressible protein 2 (749 aa).

The signal sequence occupies residues 1–14 (MRAVLLFVVSLAAL).

Belongs to the hemocyanin family. In terms of tissue distribution, fat body, and hemolymph of larvae.

The polypeptide is Basic juvenile hormone-suppressible protein 2 (BJSP-2) (Trichoplusia ni (Cabbage looper)).